The sequence spans 87 residues: Ragulator complex protein LAMTOR4 homolog (87 aa).

This sequence belongs to the LAMTOR4 family. As to quaternary structure, part of the Ragulator complex.

It localises to the lysosome. Functionally, regulator of the TOR pathway, a signaling cascade that promotes cell growth in response to growth factors, energy levels, and amino acids. As part of the Ragulator complex, may activate the TOR signaling cascade in response to amino acids. This is Ragulator complex protein LAMTOR4 homolog from Dictyostelium discoideum (Social amoeba).